A 144-amino-acid chain; its full sequence is Maximins 1/H12 (144 aa).

An N-terminal signal peptide occupies residues 1-18 (MNFKYIVAVSFLIASAYA). Positions 19-43 (RSEENDEQSLSQRDVLEEESLREIR) are excised as a propeptide. Asparagine 70 bears the Asparagine amide mark. The propeptide occupies 74–123 (TAEEHEVMKRLEVVMRDLDSLDYPEEASERETRDFNQEEIANLYTKKEKR). Isoleucine 143 is modified (isoleucine amide).

This sequence belongs to the bombinin family. Expressed by the skin glands.

It is found in the secreted. Maximin-1 shows antibacterial activity against both Gram-positive and Gram-negative bacteria. It also shows antimicrobial activity against the fungus C.albicans, but not against A.flavus nor P.uticale. It has little hemolytic activity. It possess a significant cytotoxicity against tumor cell lines. It does not possess a significant anti-HIV activity. It shows high spermicidal activity. Functionally, maximin-H12 shows antimicrobial activity against bacteria and against the fungus C.albicans. Shows strong hemolytic activity. The chain is Maximins 1/H12 from Bombina maxima (Giant fire-bellied toad).